We begin with the raw amino-acid sequence, 594 residues long: Alanine--tRNA ligase (594 aa).

The Zn(2+) site is built by His456, His460, Cys558, and His562.

It belongs to the class-II aminoacyl-tRNA synthetase family. Zn(2+) is required as a cofactor.

The protein localises to the cytoplasm. The enzyme catalyses tRNA(Ala) + L-alanine + ATP = L-alanyl-tRNA(Ala) + AMP + diphosphate. In terms of biological role, catalyzes the attachment of alanine to tRNA(Ala) in a two-step reaction: alanine is first activated by ATP to form Ala-AMP and then transferred to the acceptor end of tRNA(Ala). Also edits incorrectly charged Ser-tRNA(Ala) and Gly-tRNA(Ala) via its editing domain. This is Alanine--tRNA ligase (alaS) from Borrelia garinii subsp. bavariensis (strain ATCC BAA-2496 / DSM 23469 / PBi) (Borreliella bavariensis).